The sequence spans 703 residues: Solute carrier family 28 member 3 (703 aa).

The span at 1 to 19 (MSRADPGKNSEPSESKMSL) shows a compositional bias: basic and acidic residues. Positions 1-93 (MSRADPGKNS…DPEDDSEDEH (93 aa)) are disordered. The Cytoplasmic portion of the chain corresponds to 1–117 (MSRADPGKNS…FCRKHRVVLR (117 aa)). Residues 44–61 (QNTPGNSTVRNRVVQSGE) show a composition bias toward polar residues. Residues 63-72 (GHAKQDDRQI) show a composition bias toward basic and acidic residues. A helical transmembrane segment spans residues 118–138 (STIWAVLLTGFLALVIAACAI). Topologically, residues 139-143 (NFHRA) are extracellular. Residues 144–164 (LPLFVITLVTIFFVIWDHLMA) form a helical membrane-spanning segment. Residues 165-188 (KYEQRIDDFLSPGRRLLDRHWFWL) are Cytoplasmic-facing. A helical membrane pass occupies residues 189-209 (KWVVWSSLILAIILWLSLDTA). At 210 to 212 (KLG) the chain is on the extracellular side. A helical transmembrane segment spans residues 213 to 234 (QQNLVSFGGLIMYLILLFLFSK). Topologically, residues 235–242 (HPTRVYWR) are cytoplasmic. Residues 243-262 (PVFWGIGLQFLLGLLILRTR) traverse the membrane as a helical segment. Topologically, residues 263 to 299 (PGFVAFDWMGRQVQTFLGYTDTGARFVFGEKYTDHFF) are extracellular. The chain crosses the membrane as a helical span at residues 300–320 (AFKILPIVVFFSTVMSMLYYL). Residues 321 to 344 (GLMQWIIRKVGWLMLVTMGSSPIE) are Cytoplasmic-facing. Positions 345–363 (SVVAAGNIFIGQTESPLLV) form an intramembrane region, helical. Residues 364-376 (QPYLPHVTKSELH) lie on the Cytoplasmic side of the membrane. The helical transmembrane segment at 377 to 399 (TIMTAGFATIAGSVLGAYISFGV) threads the bilayer. Over 400-401 (SS) the chain is Extracellular. The chain crosses the membrane as a helical span at residues 402-423 (THLLTASVMSAPAALAVAKLFW). Residues 424–458 (PETEKPKITLKSAMKMENGDSRNLLEAASQGASSS) are Cytoplasmic-facing. Residues 459-484 (IPLVANIAANLIAFLALLSFVNSALS) form a helical membrane-spanning segment. At 485-522 (WFGSMFNYPELSFELICSYIFMPFSFMMGVDWQDSFMV) the chain is on the extracellular side. Positions 523–542 (AKLIGYKTFFNEFVAYDHLS) form an intramembrane region, helical. Topologically, residues 543 to 581 (KLINLRKAAGPKFVNGVQQYMSIRSETIATYALCGFANF) are extracellular. Residues 582 to 592 (GSLGIVIGGLT) form a helical membrane-spanning segment. Over 593–605 (SIAPSRKRDIASG) the chain is Cytoplasmic. The chain crosses the membrane as a helical span at residues 606–628 (AMRALIAGTIACFMTACIAGILS). Residues 629–703 (DTPVDINCHH…LNCNWIPNKL (75 aa)) are Extracellular-facing.

This sequence belongs to the concentrative nucleoside transporter (CNT) (TC 2.A.41) family. As to quaternary structure, homotrimer.

Its subcellular location is the cell membrane. It carries out the reaction thymidine(out) + 2 Na(+)(out) = thymidine(in) + 2 Na(+)(in). It catalyses the reaction cytidine(out) + 2 Na(+)(out) = cytidine(in) + 2 Na(+)(in). The catalysed reaction is uridine(out) + 2 Na(+)(out) = uridine(in) + 2 Na(+)(in). The enzyme catalyses adenosine(out) + 2 Na(+)(out) = adenosine(in) + 2 Na(+)(in). It carries out the reaction guanosine(out) + 2 Na(+)(out) = guanosine(in) + 2 Na(+)(in). It catalyses the reaction inosine(out) + 2 Na(+)(out) = inosine(in) + 2 Na(+)(in). Its function is as follows. Sodium-dependent, pyrimidine- and purine-selective. Involved in the homeostasis of endogenous nucleosides. Exhibits the transport characteristics of the nucleoside transport system cib or N3 subtype (N3/cib) (with marked transport of both thymidine and inosine). Employs a 2:1 sodium/nucleoside ratio. Also able to transport gemcitabine, 3'-azido-3'-deoxythymidine (AZT), ribavirin and 3-deazauridine. In Mus musculus (Mouse), this protein is Solute carrier family 28 member 3 (Slc28a3).